The sequence spans 235 residues: Small ribosomal subunit protein uS3 (235 aa).

The KH type-2 domain maps to 39 to 107 (VRLFLRKELF…PTQINIAEIR (69 aa)).

Belongs to the universal ribosomal protein uS3 family. As to quaternary structure, part of the 30S ribosomal subunit. Forms a tight complex with proteins S10 and S14.

Binds the lower part of the 30S subunit head. Binds mRNA in the 70S ribosome, positioning it for translation. The polypeptide is Small ribosomal subunit protein uS3 (Buchnera aphidicola subsp. Baizongia pistaciae (strain Bp)).